A 393-amino-acid polypeptide reads, in one-letter code: Diphosphomevalonate decarboxylase (393 aa).

(R)-5-diphosphomevalonate contacts are provided by residues 21–24, Arg-77, 156–161, and Thr-212; these read YWGK and SGSACR.

This sequence belongs to the diphosphomevalonate decarboxylase family. In terms of assembly, homodimer.

The protein resides in the cytoplasm. Its subcellular location is the nucleus. It carries out the reaction (R)-5-diphosphomevalonate + ATP = isopentenyl diphosphate + ADP + phosphate + CO2. It participates in isoprenoid biosynthesis; isopentenyl diphosphate biosynthesis via mevalonate pathway; isopentenyl diphosphate from (R)-mevalonate: step 3/3. Diphosphomevalonate decarboxylase; part of the second module of ergosterol biosynthesis pathway that includes the middle steps of the pathway. Mvd1 converts diphosphomevalonate into isopentenyl diphosphate. The second module is carried out in the vacuole and involves the formation of farnesyl diphosphate, which is also an important intermediate in the biosynthesis of ubiquinone, dolichol, heme and prenylated proteins. Activity by the mevalonate kinase erg12 first converts mevalonate into 5-phosphomevalonate. 5-phosphomevalonate is then further converted to 5-diphosphomevalonate by the phosphomevalonate kinase erg8. The diphosphomevalonate decarboxylase mvd1 then produces isopentenyl diphosphate. The isopentenyl-diphosphate delta-isomerase idi1 then catalyzes the 1,3-allylic rearrangement of the homoallylic substrate isopentenyl (IPP) to its highly electrophilic allylic isomer, dimethylallyl diphosphate (DMAPP). Finally the farnesyl diphosphate synthase fps1 catalyzes the sequential condensation of isopentenyl pyrophosphate with dimethylallyl pyrophosphate, and then with the resultant geranylpyrophosphate to the ultimate product farnesyl pyrophosphate. This chain is Diphosphomevalonate decarboxylase (mvd1), found in Schizosaccharomyces pombe (strain 972 / ATCC 24843) (Fission yeast).